A 65-amino-acid chain; its full sequence is Large ribosomal subunit protein bL35 (65 aa).

Belongs to the bacterial ribosomal protein bL35 family.

This is Large ribosomal subunit protein bL35 from Karelsulcia muelleri (strain GWSS) (Sulcia muelleri).